A 212-amino-acid polypeptide reads, in one-letter code: GTP-binding nuclear protein Ran (212 aa).

A Small GTPase Ran-type domain is found at 3–167 (EKEQIKLVLV…VWLTSKLLGN (165 aa)). 14–21 (DGGVGKTT) contributes to the GTP binding site. Residues 33–41 (PRYIPTLGV) are switch-I. GTP contacts are provided by residues G64, 118 to 121 (NKVD), and 146 to 148 (SAK). The tract at residues 64–80 (GQEKFGGLRDGYYIQGN) is switch-II.

This sequence belongs to the small GTPase superfamily. Ran family. Found in a nuclear export complex with RanGTP, exportin and pre-miRNA.

Its subcellular location is the nucleus. In terms of biological role, GTP-binding protein involved in nucleocytoplasmic transport. Required for the import of protein into the nucleus and also for RNA export. Involved in chromatin condensation and control of cell cycle. This is GTP-binding nuclear protein Ran (ranA) from Dictyostelium discoideum (Social amoeba).